The sequence spans 491 residues: Peptidyl-prolyl isomerase CWC27 (491 aa).

In terms of domain architecture, PPIase cyclophilin-type spans T11–I167. Composition is skewed to basic and acidic residues over residues A186–E202, D268–A298, and A306–R316. Disordered regions lie at residues A186–D427 and R464–R491. The stretch at A277–D327 forms a coiled coil. Low complexity predominate over residues G323–S333. Residues A352–G367 are compositionally biased toward basic residues. 2 stretches are compositionally biased toward acidic residues: residues D391 to A406 and A418 to D427. Residues R482–R491 show a composition bias toward basic residues.

This sequence belongs to the cyclophilin-type PPIase family. CWC27 subfamily. As to quaternary structure, associated with the spliceosome.

The protein resides in the cytoplasm. It localises to the nucleus. The enzyme catalyses [protein]-peptidylproline (omega=180) = [protein]-peptidylproline (omega=0). PPIases accelerate the folding of proteins. It catalyzes the cis-trans isomerization of proline imidic peptide bonds in oligopeptides. Involved in pre-mRNA splicing. In Cryptococcus neoformans var. neoformans serotype D (strain B-3501A) (Filobasidiella neoformans), this protein is Peptidyl-prolyl isomerase CWC27 (CWC27).